Reading from the N-terminus, the 340-residue chain is Nicotinate-nucleotide--dimethylbenzimidazole phosphoribosyltransferase (340 aa).

The Proton acceptor role is filled by Glu-305.

This sequence belongs to the CobT family.

It carries out the reaction 5,6-dimethylbenzimidazole + nicotinate beta-D-ribonucleotide = alpha-ribazole 5'-phosphate + nicotinate + H(+). Its pathway is nucleoside biosynthesis; alpha-ribazole biosynthesis; alpha-ribazole from 5,6-dimethylbenzimidazole: step 1/2. Catalyzes the synthesis of alpha-ribazole-5'-phosphate from nicotinate mononucleotide (NAMN) and 5,6-dimethylbenzimidazole (DMB). This chain is Nicotinate-nucleotide--dimethylbenzimidazole phosphoribosyltransferase, found in Allorhizobium ampelinum (strain ATCC BAA-846 / DSM 112012 / S4) (Agrobacterium vitis (strain S4)).